The sequence spans 150 residues: uncharacterized protein (150 aa).

Belongs to the OsmC/Ohr family.

This is an uncharacterized protein from Bacillus subtilis (strain 168).